The sequence spans 424 residues: Putative fasciclin-like arabinogalactan protein 20 (424 aa).

The helical transmembrane segment at 46–66 (LLTTFFLIFFVLDIDLVATSM) threads the bilayer. The 139-residue stretch at 56 to 194 (VLDIDLVATS…YVVIYGSDEF (139 aa)) folds into the FAS1 1 domain. Asparagine 153 and asparagine 160 each carry an N-linked (GlcNAc...) asparagine glycan. Low complexity predominate over residues 199 to 226 (TKISDDSSSSSSIPSTTSSTGSIPIPSS). A disordered region spans residues 199 to 246 (TKISDDSSSSSSIPSTTSSTGSIPIPSSATQTPPSPNIASDSTRNLPN). Over residues 227 to 246 (ATQTPPSPNIASDSTRNLPN) the composition is skewed to polar residues. N-linked (GlcNAc...) asparagine glycans are attached at residues asparagine 246, asparagine 283, and asparagine 287. The region spanning 250–384 (PVNRFNIFES…IAVHGFNQMI (135 aa)) is the FAS1 2 domain. A disordered region spans residues 405–424 (QEEEGVHGEYSSELGDYGLH).

It belongs to the fasciclin-like AGP family.

The protein resides in the membrane. Its function is as follows. May be a cell surface adhesion protein. The sequence is that of Putative fasciclin-like arabinogalactan protein 20 (FLA20) from Arabidopsis thaliana (Mouse-ear cress).